Here is a 225-residue protein sequence, read N- to C-terminus: tRNA (guanine-N(1)-)-methyltransferase (225 aa).

Residues G112 and 132–137 each bind S-adenosyl-L-methionine; that span reads IGDYVL.

Belongs to the RNA methyltransferase TrmD family. Homodimer.

The protein resides in the cytoplasm. It carries out the reaction guanosine(37) in tRNA + S-adenosyl-L-methionine = N(1)-methylguanosine(37) in tRNA + S-adenosyl-L-homocysteine + H(+). Specifically methylates guanosine-37 in various tRNAs. The chain is tRNA (guanine-N(1)-)-methyltransferase from Porphyromonas gingivalis (strain ATCC BAA-308 / W83).